The following is a 1418-amino-acid chain: Protein ced-11 (1418 aa).

Transmembrane regions (helical) follow at residues 617-637, 755-775, 782-802, 818-838, 856-876, 898-918, and 986-1006; these read FPIF…IIPV, YWLS…SVVL, LWDT…CFVL, VFDV…KVFP, VVSA…YIPL, FLFM…AVVF, and IVIE…FAFF.

It is found in the membrane. Plays a major role in programmed cell death. This is Protein ced-11 (ced-11) from Caenorhabditis elegans.